A 236-amino-acid polypeptide reads, in one-letter code: DNA repair protein RecO (236 aa).

Belongs to the RecO family.

Involved in DNA repair and RecF pathway recombination. The chain is DNA repair protein RecO from Rickettsia typhi (strain ATCC VR-144 / Wilmington).